A 701-amino-acid polypeptide reads, in one-letter code: Elongation factor G (701 aa).

The 281-residue stretch at 10–290 (AKVRNIGIMA…AVVDYLPSPL (281 aa)) folds into the tr-type G domain. Residues 19-26 (AHIDAGKT), 83-87 (DTPGH), and 137-140 (NKMD) each bind GTP.

Belongs to the TRAFAC class translation factor GTPase superfamily. Classic translation factor GTPase family. EF-G/EF-2 subfamily.

Its subcellular location is the cytoplasm. In terms of biological role, catalyzes the GTP-dependent ribosomal translocation step during translation elongation. During this step, the ribosome changes from the pre-translocational (PRE) to the post-translocational (POST) state as the newly formed A-site-bound peptidyl-tRNA and P-site-bound deacylated tRNA move to the P and E sites, respectively. Catalyzes the coordinated movement of the two tRNA molecules, the mRNA and conformational changes in the ribosome. This chain is Elongation factor G, found in Tropheryma whipplei (strain TW08/27) (Whipple's bacillus).